The chain runs to 132 residues: Prefoldin subunit alpha (132 aa).

It belongs to the prefoldin subunit alpha family. Heterohexamer of two alpha and four beta subunits.

The protein resides in the cytoplasm. In terms of biological role, molecular chaperone capable of stabilizing a range of proteins. Seems to fulfill an ATP-independent, HSP70-like function in archaeal de novo protein folding. This chain is Prefoldin subunit alpha, found in Pyrobaculum islandicum (strain DSM 4184 / JCM 9189 / GEO3).